Here is a 314-residue protein sequence, read N- to C-terminus: Probable cell division protein WhiA (314 aa).

The H-T-H motif DNA-binding region spans S275–R309.

This sequence belongs to the WhiA family.

Its function is as follows. Involved in cell division and chromosome segregation. In Oceanobacillus iheyensis (strain DSM 14371 / CIP 107618 / JCM 11309 / KCTC 3954 / HTE831), this protein is Probable cell division protein WhiA.